We begin with the raw amino-acid sequence, 1196 residues long: DNA-directed RNA polymerase subunit beta (1196 aa).

It belongs to the RNA polymerase beta chain family. In terms of assembly, the RNAP catalytic core consists of 2 alpha, 1 beta, 1 beta' and 1 omega subunit. When a sigma factor is associated with the core the holoenzyme is formed, which can initiate transcription.

It carries out the reaction RNA(n) + a ribonucleoside 5'-triphosphate = RNA(n+1) + diphosphate. In terms of biological role, DNA-dependent RNA polymerase catalyzes the transcription of DNA into RNA using the four ribonucleoside triphosphates as substrates. The protein is DNA-directed RNA polymerase subunit beta of Lactococcus lactis subsp. cremoris (strain MG1363).